A 216-amino-acid polypeptide reads, in one-letter code: Ribonuclease HII (216 aa).

Residues 28–216 (DIVCGVDEAG…PVRAALDLIR (189 aa)) enclose the RNase H type-2 domain. Residues D34, E35, and D126 each coordinate a divalent metal cation.

It belongs to the RNase HII family. The cofactor is Mn(2+). Requires Mg(2+) as cofactor.

The protein resides in the cytoplasm. It catalyses the reaction Endonucleolytic cleavage to 5'-phosphomonoester.. Endonuclease that specifically degrades the RNA of RNA-DNA hybrids. The chain is Ribonuclease HII from Burkholderia vietnamiensis (strain G4 / LMG 22486) (Burkholderia cepacia (strain R1808)).